Consider the following 165-residue polypeptide: Large ribosomal subunit protein uL11A (165 aa).

An N5-methylarginine modification is found at Arg67.

The protein belongs to the universal ribosomal protein uL11 family. In terms of assembly, component of the large ribosomal subunit (LSU). Mature yeast ribosomes consist of a small (40S) and a large (60S) subunit. The 40S small subunit contains 1 molecule of ribosomal RNA (18S rRNA) and at least 33 different proteins. The large 60S subunit contains 3 rRNA molecules (25S, 5.8S and 5S rRNA) and at least 46 different proteins.

It is found in the cytoplasm. The protein localises to the nucleus. Its subcellular location is the nucleolus. In terms of biological role, this protein binds directly to 26S ribosomal RNA. Its function is as follows. Component of the ribosome, a large ribonucleoprotein complex responsible for the synthesis of proteins in the cell. The small ribosomal subunit (SSU) binds messenger RNAs (mRNAs) and translates the encoded message by selecting cognate aminoacyl-transfer RNA (tRNA) molecules. The large subunit (LSU) contains the ribosomal catalytic site termed the peptidyl transferase center (PTC), which catalyzes the formation of peptide bonds, thereby polymerizing the amino acids delivered by tRNAs into a polypeptide chain. The nascent polypeptides leave the ribosome through a tunnel in the LSU and interact with protein factors that function in enzymatic processing, targeting, and the membrane insertion of nascent chains at the exit of the ribosomal tunnel. This chain is Large ribosomal subunit protein uL11A (rpl1201), found in Schizosaccharomyces pombe (strain 972 / ATCC 24843) (Fission yeast).